Reading from the N-terminus, the 145-residue chain is Large ribosomal subunit protein uL24 (145 aa).

Disordered regions lie at residues 1–21 (MKFNPFVTSDRSKNRKRHFNA) and 122–145 (KAKSRQVGKEKGKYKEETIEKMQE). A Glycyl lysine isopeptide (Lys-Gly) (interchain with G-Cter in SUMO2) cross-link involves residue lysine 136. A Phosphothreonine modification is found at threonine 139.

Belongs to the universal ribosomal protein uL24 family. In terms of assembly, component of the large ribosomal subunit. Interacts with DHX33. Post-translationally, ufmylated by UFL1 in response to endoplasmic reticulum stress, promoting reticulophagy of endoplasmic reticulum sheets.

Its subcellular location is the cytoplasm. Its function is as follows. Component of the large ribosomal subunit. The ribosome is a large ribonucleoprotein complex responsible for the synthesis of proteins in the cell. This chain is Large ribosomal subunit protein uL24 (Rpl26), found in Rattus norvegicus (Rat).